The chain runs to 214 residues: Glycerol-3-phosphate acyltransferase (214 aa).

Transmembrane regions (helical) follow at residues 4–24, 52–72, 82–102, 118–138, and 159–179; these read LIVA…IVSA, AAIL…WFVV, ETSV…PVFF, LAIN…VAFF, and FLFG…LLVW.

Belongs to the PlsY family. In terms of assembly, probably interacts with PlsX.

The protein localises to the cell inner membrane. It carries out the reaction an acyl phosphate + sn-glycerol 3-phosphate = a 1-acyl-sn-glycero-3-phosphate + phosphate. The protein operates within lipid metabolism; phospholipid metabolism. Functionally, catalyzes the transfer of an acyl group from acyl-phosphate (acyl-PO(4)) to glycerol-3-phosphate (G3P) to form lysophosphatidic acid (LPA). This enzyme utilizes acyl-phosphate as fatty acyl donor, but not acyl-CoA or acyl-ACP. This is Glycerol-3-phosphate acyltransferase from Paraburkholderia phytofirmans (strain DSM 17436 / LMG 22146 / PsJN) (Burkholderia phytofirmans).